We begin with the raw amino-acid sequence, 252 residues long: uncharacterized protein (252 aa).

Residues 1–23 (MKLLKTVPAIVMLAGGMFASLNA) form the signal peptide. Residues 231–252 (EPPESAPEHTDRRTTLSLGYSM) form a disordered region.

This is an uncharacterized protein from Escherichia coli (strain K12).